Consider the following 405-residue polypeptide: Imidazolonepropionase (405 aa).

Residues histidine 73 and histidine 75 each contribute to the Fe(3+) site. Zn(2+) is bound by residues histidine 73 and histidine 75. 4-imidazolone-5-propanoate-binding residues include arginine 82, tyrosine 145, and histidine 178. Tyrosine 145 lines the N-formimidoyl-L-glutamate pocket. Histidine 243 contacts Fe(3+). Histidine 243 contributes to the Zn(2+) binding site. Glutamine 246 serves as a coordination point for 4-imidazolone-5-propanoate. Fe(3+) is bound at residue aspartate 318. A Zn(2+)-binding site is contributed by aspartate 318. The N-formimidoyl-L-glutamate site is built by asparagine 320 and glycine 322. Threonine 323 contacts 4-imidazolone-5-propanoate.

This sequence belongs to the metallo-dependent hydrolases superfamily. HutI family. Requires Zn(2+) as cofactor. Fe(3+) is required as a cofactor.

It localises to the cytoplasm. It carries out the reaction 4-imidazolone-5-propanoate + H2O = N-formimidoyl-L-glutamate. The protein operates within amino-acid degradation; L-histidine degradation into L-glutamate; N-formimidoyl-L-glutamate from L-histidine: step 3/3. Catalyzes the hydrolytic cleavage of the carbon-nitrogen bond in imidazolone-5-propanoate to yield N-formimidoyl-L-glutamate. It is the third step in the universal histidine degradation pathway. This is Imidazolonepropionase from Brucella suis biovar 1 (strain 1330).